Reading from the N-terminus, the 309-residue chain is Olfactory receptor 10J5 (309 aa).

Topologically, residues 1–27 (MQRNNFTEVIEFVFLGFSSFGKHQITL) are extracellular. Residues 28 to 48 (FVVFLTIYILTLAGNIIIVTI) traverse the membrane as a helical segment. At 49–57 (THIDHHLHT) the chain is on the cytoplasmic side. Residues 58–78 (PMYFFLSMLASSETVYTLVIV) form a helical membrane-spanning segment. The Extracellular portion of the chain corresponds to 79 to 84 (PRMLSS). Residues 85–105 (LIFYNLPISLAGCATQMFFFV) traverse the membrane as a helical segment. Cys-97 and Cys-178 are joined by a disulfide. Topologically, residues 106–131 (TLATNNCFLLTAMGYDRYVAICNPLR) are cytoplasmic. Residues 132–152 (YTIIMSKGMCALLVCGSLGTG) form a helical membrane-spanning segment. Residues 153-203 (LVMAVLHVPAMFHLPFCGTVVEHFFCDIYPVMKLSCVDTTVNEIINYGVSS) are Extracellular-facing. Residues 204 to 224 (FVILVPIGLIFISYVLIVSSI) form a helical membrane-spanning segment. Residues 225-235 (LKIVSTEGQKK) are Cytoplasmic-facing. Residues 236 to 256 (AFATCASHLTVVIVHYGCASI) traverse the membrane as a helical segment. Over 257-270 (AYLKPKSESSVEKD) the chain is Extracellular. A helical membrane pass occupies residues 271–291 (LLLSVTYTIITPLLNPVVYSL). Topologically, residues 292-309 (RNKEVKDALCRAVGRNTS) are cytoplasmic.

The protein belongs to the G-protein coupled receptor 1 family. As to expression, expressed in the olfactory epithelium as well as in the testis. Expressed in round spermatids during stages VI-VIII of spermatogenesis.

The protein resides in the cell membrane. In terms of biological role, olfactory receptor. Activated by the synthetic floral odorant, lyral, and by alpha-cedrene, a sesquiterpene constituent of cedarwood oil. Its activation increases intracellular Ca(2+). Acts as a key regulator of myogenesis through its actions on cell migration and adhesion by activating the Ca(2+)-dependent AKT signal transduction pathway. Also acts as a regulator of angiogenesis. Moreover, plays a role in the regulation of lipid accumulation in hepatocytes via the cAMP-PKA pathway. Involved in sperm chemotaxis and motility. The sequence is that of Olfactory receptor 10J5 from Mus musculus (Mouse).